The primary structure comprises 274 residues: Formamidopyrimidine-DNA glycosylase (274 aa).

The active-site Schiff-base intermediate with DNA is Pro2. Glu3 (proton donor) is an active-site residue. The active-site Proton donor; for beta-elimination activity is Lys60. The DNA site is built by His93 and Arg112. The FPG-type zinc finger occupies 240-274 (DVYGRKGETCRQCGTPITKTVVGGRGTHFCSVCQK). Catalysis depends on Arg264, which acts as the Proton donor; for delta-elimination activity.

The protein belongs to the FPG family. Monomer. Zn(2+) is required as a cofactor.

It carries out the reaction Hydrolysis of DNA containing ring-opened 7-methylguanine residues, releasing 2,6-diamino-4-hydroxy-5-(N-methyl)formamidopyrimidine.. The enzyme catalyses 2'-deoxyribonucleotide-(2'-deoxyribose 5'-phosphate)-2'-deoxyribonucleotide-DNA = a 3'-end 2'-deoxyribonucleotide-(2,3-dehydro-2,3-deoxyribose 5'-phosphate)-DNA + a 5'-end 5'-phospho-2'-deoxyribonucleoside-DNA + H(+). Functionally, involved in base excision repair of DNA damaged by oxidation or by mutagenic agents. Acts as a DNA glycosylase that recognizes and removes damaged bases. Has a preference for oxidized purines, such as 7,8-dihydro-8-oxoguanine (8-oxoG). Has AP (apurinic/apyrimidinic) lyase activity and introduces nicks in the DNA strand. Cleaves the DNA backbone by beta-delta elimination to generate a single-strand break at the site of the removed base with both 3'- and 5'-phosphates. The protein is Formamidopyrimidine-DNA glycosylase (mutM) of Halalkalibacterium halodurans (strain ATCC BAA-125 / DSM 18197 / FERM 7344 / JCM 9153 / C-125) (Bacillus halodurans).